Reading from the N-terminus, the 31-residue chain is Photosystem II reaction center protein T (31 aa).

Residues 3–23 traverse the membrane as a helical segment; that stretch reads SVAYILVLTMTLAVLFFAIAF.

Belongs to the PsbT family. In terms of assembly, PSII is composed of 1 copy each of membrane proteins PsbA, PsbB, PsbC, PsbD, PsbE, PsbF, PsbH, PsbI, PsbJ, PsbK, PsbL, PsbM, PsbT, PsbX, PsbY, PsbZ, Psb30/Ycf12, peripheral proteins PsbO, CyanoQ (PsbQ), PsbU, PsbV and a large number of cofactors. It forms dimeric complexes.

It is found in the cellular thylakoid membrane. Its function is as follows. Found at the monomer-monomer interface of the photosystem II (PS II) dimer, plays a role in assembly and dimerization of PSII. PSII is a light-driven water plastoquinone oxidoreductase, using light energy to abstract electrons from H(2)O, generating a proton gradient subsequently used for ATP formation. The protein is Photosystem II reaction center protein T of Rippkaea orientalis (strain PCC 8801 / RF-1) (Cyanothece sp. (strain PCC 8801)).